We begin with the raw amino-acid sequence, 151 residues long: Small ribosomal subunit protein uS15 (151 aa).

Residues 1-20 (MARLHSGKRGSSGSTKPLRT) are disordered.

This sequence belongs to the universal ribosomal protein uS15 family. Part of the 30S ribosomal subunit.

In Methanococcus vannielii (strain ATCC 35089 / DSM 1224 / JCM 13029 / OCM 148 / SB), this protein is Small ribosomal subunit protein uS15.